Here is a 741-residue protein sequence, read N- to C-terminus: Chromosome transmission fidelity protein 18 (741 aa).

183–190 (GPPGIGKT) serves as a coordination point for ATP.

It belongs to the activator 1 small subunits family. CTF18 subfamily. In terms of assembly, component of the CTF18-RFC complex, which consists of CTF18, CTF8, DCC1, RFC2, RFC3, RFC4 and RFC5. CTF18 interacts with ECO1.

The protein localises to the nucleus. Its function is as follows. Essential for the fidelity of chromosome transmission. Required for the DNA replication block checkpoint. Component of the RFC-like complex CTF18-RFC which is required for efficient establishment of chromosome cohesion during S-phase and may load or unload POL30/PCNA. During a clamp loading circle, the RFC:clamp complex binds to DNA and the recognition of the double-stranded/single-stranded junction stimulates ATP hydrolysis by RFC. The complex presumably provides bipartite ATP sites in which one subunit supplies a catalytic site for hydrolysis of ATP bound to the neighboring subunit. Dissociation of RFC from the clamp leaves the clamp encircling DNA. This chain is Chromosome transmission fidelity protein 18 (CTF18), found in Saccharomyces cerevisiae (strain ATCC 204508 / S288c) (Baker's yeast).